The primary structure comprises 192 residues: MNEYLLLLISTVLVNNFVLVKFLGLCPFMGVSSKLESAIGMSMATTFVLTLASILSYLVNQYLLLPFDLSYLRTMSFILVIAVVVQFTEMVVQKTSAALHRALGIYLPLITTNCAVLGVALLNVNEKHDFIQSAIFGFGAALGFSLVLILFSAMRERLAAADVPLPFKGGAIAMITAGLMSLAFMGFTGLVK.

Transmembrane regions (helical) follow at residues Leu-5–Leu-25, Ile-39–Val-59, Leu-65–Val-85, Ala-102–Leu-122, Ala-134–Met-154, and Ala-171–Val-191.

It belongs to the NqrDE/RnfAE family. The complex is composed of six subunits: RnfA, RnfB, RnfC, RnfD, RnfE and RnfG.

The protein localises to the cell inner membrane. Its function is as follows. Part of a membrane-bound complex that couples electron transfer with translocation of ions across the membrane. This Shewanella baltica (strain OS223) protein is Ion-translocating oxidoreductase complex subunit A.